A 599-amino-acid chain; its full sequence is UvrABC system protein C (599 aa).

A GIY-YIG domain is found at 13–91; sequence NLPGVYRMIN…IKGFMPRYNV (79 aa). The UVR domain occupies 200–235; it reads QQVMDELGEKMNEAAEKMEYELAAVYRDRIQSLRQV.

Belongs to the UvrC family. Interacts with UvrB in an incision complex.

The protein localises to the cytoplasm. The UvrABC repair system catalyzes the recognition and processing of DNA lesions. UvrC both incises the 5' and 3' sides of the lesion. The N-terminal half is responsible for the 3' incision and the C-terminal half is responsible for the 5' incision. The sequence is that of UvrABC system protein C from Methylobacillus flagellatus (strain ATCC 51484 / DSM 6875 / VKM B-1610 / KT).